We begin with the raw amino-acid sequence, 384 residues long: 4-coumarate--CoA ligase (384 aa).

It belongs to the ATP-dependent AMP-binding enzyme family.

It carries out the reaction (E)-4-coumarate + ATP + CoA = (E)-4-coumaroyl-CoA + AMP + diphosphate. Functionally, converts p-coumaric acid into p-coumaryl CoA. This is necessary for the activation of the photoactive yellow protein (PYP) chromophore. The protein is 4-coumarate--CoA ligase (pcl) of Rhodobacter capsulatus (strain ATCC BAA-309 / NBRC 16581 / SB1003).